The chain runs to 196 residues: DnaA initiator-associating protein DiaA (196 aa).

In terms of domain architecture, SIS spans 34–196 (LVQSLLNGNK…DNTLFPHQDV (163 aa)).

It belongs to the SIS family. DiaA subfamily. In terms of assembly, homotetramer; dimer of dimers.

Its function is as follows. Required for the timely initiation of chromosomal replication via direct interactions with the DnaA initiator protein. This Escherichia coli O6:K15:H31 (strain 536 / UPEC) protein is DnaA initiator-associating protein DiaA.